Here is a 322-residue protein sequence, read N- to C-terminus: HPr kinase/phosphorylase (322 aa).

Catalysis depends on residues histidine 146 and lysine 167. 161–168 serves as a coordination point for ATP; sequence GDSGLGKS. Serine 168 contributes to the Mg(2+) binding site. The active-site Proton acceptor; for phosphorylation activity. Proton donor; for dephosphorylation activity is the aspartate 185. The segment at 209–218 is important for the catalytic mechanism of both phosphorylation and dephosphorylation; it reads LEVRGLGLLD. Glutamate 210 provides a ligand contact to Mg(2+). The active site involves arginine 250. The segment at 271–276 is important for the catalytic mechanism of dephosphorylation; the sequence is QVAAGR.

The protein belongs to the HPrK/P family. In terms of assembly, homohexamer. Mg(2+) serves as cofactor.

The catalysed reaction is [HPr protein]-L-serine + ATP = [HPr protein]-O-phospho-L-serine + ADP + H(+). It catalyses the reaction [HPr protein]-O-phospho-L-serine + phosphate + H(+) = [HPr protein]-L-serine + diphosphate. Its function is as follows. Catalyzes the ATP- as well as the pyrophosphate-dependent phosphorylation of a specific serine residue in HPr, a phosphocarrier protein of the phosphoenolpyruvate-dependent sugar phosphotransferase system (PTS). HprK/P also catalyzes the pyrophosphate-producing, inorganic phosphate-dependent dephosphorylation (phosphorolysis) of seryl-phosphorylated HPr (P-Ser-HPr). This is HPr kinase/phosphorylase from Paraburkholderia phytofirmans (strain DSM 17436 / LMG 22146 / PsJN) (Burkholderia phytofirmans).